The primary structure comprises 1451 residues: Dicer-like protein 2 (1451 aa).

The tract at residues 34 to 53 (YDGHLSEEDSPGGKPRPKEQ) is disordered. Residues 70 to 247 (MLEASLKENI…LKRLESTLDA (178 aa)) form the Helicase ATP-binding domain. 83-90 (MDTGSGKT) lines the ATP pocket. The DEAH box signature appears at 190-193 (DEAH). A Helicase C-terminal domain is found at 412–582 (KVQRIIEVLL…RLEAIENSEA (171 aa)). The Dicer dsRNA-binding fold domain occupies 603-704 (AKSHLQHFVS…LPLRDRLELE (102 aa)). RNase III domains follow at residues 968–1111 (AAEL…VDGG) and 1153–1351 (LQLL…VDAG). Glutamate 1192 is a Mg(2+) binding site. The segment at 1253-1272 (EGDSDSKSSGDSTSDKASPR) is disordered. Residues aspartate 1337 and glutamate 1340 each contribute to the Mg(2+) site.

It belongs to the helicase family. Dicer subfamily. Requires Mg(2+) as cofactor. The cofactor is Mn(2+).

Functionally, dicer-like endonuclease involved in cleaving double-stranded RNA in the RNA interference (RNAi) pathway. Produces 21 to 25 bp dsRNAs (siRNAs) which target the selective destruction of homologous RNAs leading to sequence-specific suppression of gene expression, called post-transcriptional gene silencing (PTGS). Part of a broad host defense, DCL-2 is involved in antiviral defense against mycoviruses like the hypovirus CHV1-EP713 and the reovirus MyRV1-Cp9B21. This Cryphonectria parasitica (Chestnut blight fungus) protein is Dicer-like protein 2 (DCL-2).